Consider the following 426-residue polypeptide: Enolase (426 aa).

The tract at residues 32–53 (TGRAAVPSGASTGAYEAHEQRD) is disordered. Position 163 (Gln-163) interacts with (2R)-2-phosphoglycerate. Glu-205 serves as the catalytic Proton donor. Mg(2+) contacts are provided by Asp-242, Glu-285, and Asp-312. 4 residues coordinate (2R)-2-phosphoglycerate: Lys-337, Arg-366, Ser-367, and Lys-388. The active-site Proton acceptor is the Lys-337.

The protein belongs to the enolase family. The cofactor is Mg(2+).

It is found in the cytoplasm. Its subcellular location is the secreted. The protein resides in the cell surface. The enzyme catalyses (2R)-2-phosphoglycerate = phosphoenolpyruvate + H2O. The protein operates within carbohydrate degradation; glycolysis; pyruvate from D-glyceraldehyde 3-phosphate: step 4/5. Catalyzes the reversible conversion of 2-phosphoglycerate (2-PG) into phosphoenolpyruvate (PEP). It is essential for the degradation of carbohydrates via glycolysis. This Hyphomonas neptunium (strain ATCC 15444) protein is Enolase.